We begin with the raw amino-acid sequence, 546 residues long: Chaperonin GroEL (546 aa).

ATP is bound by residues 30-33 (TLGP), Lys51, 87-91 (DGTTT), Gly415, 479-481 (NAA), and Asp495.

Belongs to the chaperonin (HSP60) family. As to quaternary structure, forms a cylinder of 14 subunits composed of two heptameric rings stacked back-to-back. Interacts with the co-chaperonin GroES.

Its subcellular location is the cytoplasm. The enzyme catalyses ATP + H2O + a folded polypeptide = ADP + phosphate + an unfolded polypeptide.. Functionally, together with its co-chaperonin GroES, plays an essential role in assisting protein folding. The GroEL-GroES system forms a nano-cage that allows encapsulation of the non-native substrate proteins and provides a physical environment optimized to promote and accelerate protein folding. The polypeptide is Chaperonin GroEL (Allochromatium vinosum (Chromatium vinosum)).